The primary structure comprises 357 residues: Fructose-bisphosphate aldolase, cytoplasmic isozyme 1 (357 aa).

The substrate site is built by Arg52 and Lys142. The active-site Proton acceptor is Glu183. The active-site Schiff-base intermediate with dihydroxyacetone-P is the Lys225.

The protein belongs to the class I fructose-bisphosphate aldolase family.

The protein resides in the cytoplasm. The catalysed reaction is beta-D-fructose 1,6-bisphosphate = D-glyceraldehyde 3-phosphate + dihydroxyacetone phosphate. Its pathway is carbohydrate degradation; glycolysis; D-glyceraldehyde 3-phosphate and glycerone phosphate from D-glucose: step 4/4. The chain is Fructose-bisphosphate aldolase, cytoplasmic isozyme 1 from Pisum sativum (Garden pea).